We begin with the raw amino-acid sequence, 113 residues long: MSQDIYDYANKLERAVRALPEYRKALEAREEIKADEAASQLFDEFVAVQEKLQGLMQTGQLPTETEQADIQALSQKIEANDLLKGYFNAQQALSVYVNDIERIVFAPLKDLAK.

The protein belongs to the UPF0342 family.

This is UPF0342 protein SEQ_0993 from Streptococcus equi subsp. equi (strain 4047).